The sequence spans 263 residues: Protein IQ-DOMAIN 9 (263 aa).

The disordered stretch occupies residues Ser16–Leu41. The Nuclear localization signal 1 motif lies at Glu21–Val28. Over residues Thr25 to Gly38 the composition is skewed to basic residues. In terms of domain architecture, IQ spans Glu46–Ala75. The segment at Ala59–Ser78 is calmodulin-binding. Positions Ala107–Thr114 match the Nuclear localization signal 2 motif. A disordered region spans residues Thr216–Ala263. The span at Asp226–Pro241 shows a compositional bias: polar residues.

The protein belongs to the IQD family. As to quaternary structure, binds to multiple calmodulin (CaM) in the presence of Ca(2+) and CaM-like proteins.

The protein resides in the nucleus. It is found in the nuclear body. Its function is as follows. May be involved in cooperative interactions with calmodulins or calmodulin-like proteins. Recruits calmodulin proteins to microtubules, thus being a potential scaffold in cellular signaling and trafficking. May associate with nucleic acids and regulate gene expression at the transcriptional or post-transcriptional level. In Arabidopsis thaliana (Mouse-ear cress), this protein is Protein IQ-DOMAIN 9.